A 315-amino-acid chain; its full sequence is Jacalin-related lectin 10 (315 aa).

An N-terminal signal peptide occupies residues 1–23 (MVIIYIFLFLSSAIIDSTGLAKA). 2 Jacalin-type lectin domains span residues 24 to 165 (QKLD…YLTT) and 168 to 312 (PTKS…YFSP).

The protein belongs to the jacalin lectin family.

The protein is Jacalin-related lectin 10 (JAL10) of Arabidopsis thaliana (Mouse-ear cress).